Consider the following 179-residue polypeptide: Shikimate kinase (179 aa).

15 to 20 (GAGKTS) lines the ATP pocket. Residue Thr-19 participates in Mg(2+) binding. Substrate is bound by residues Asp-37, Arg-61, and Gly-83. Position 122 (Arg-122) interacts with ATP. Residue Arg-142 coordinates substrate.

The protein belongs to the shikimate kinase family. In terms of assembly, monomer. Mg(2+) is required as a cofactor.

The protein localises to the cytoplasm. The catalysed reaction is shikimate + ATP = 3-phosphoshikimate + ADP + H(+). Its pathway is metabolic intermediate biosynthesis; chorismate biosynthesis; chorismate from D-erythrose 4-phosphate and phosphoenolpyruvate: step 5/7. Its function is as follows. Catalyzes the specific phosphorylation of the 3-hydroxyl group of shikimic acid using ATP as a cosubstrate. This is Shikimate kinase from Coxiella burnetii (strain Dugway 5J108-111).